We begin with the raw amino-acid sequence, 190 residues long: Small ribosomal subunit protein eS7 (190 aa).

It belongs to the eukaryotic ribosomal protein eS7 family. Component of the small ribosomal subunit. Part of the small subunit (SSU) processome, composed of more than 70 proteins and the RNA chaperone small nucleolar RNA (snoRNA) U3.

It localises to the cytoplasm. It is found in the cytoskeleton. Its subcellular location is the microtubule organizing center. The protein resides in the centrosome. The protein localises to the nucleus. It localises to the nucleolus. Component of the small ribosomal subunit. The ribosome is a large ribonucleoprotein complex responsible for the synthesis of proteins in the cell. Required for rRNA maturation. Part of the small subunit (SSU) processome, first precursor of the small eukaryotic ribosomal subunit. During the assembly of the SSU processome in the nucleolus, many ribosome biogenesis factors, an RNA chaperone and ribosomal proteins associate with the nascent pre-rRNA and work in concert to generate RNA folding, modifications, rearrangements and cleavage as well as targeted degradation of pre-ribosomal RNA by the RNA exosome. This Spodoptera frugiperda (Fall armyworm) protein is Small ribosomal subunit protein eS7 (RpS7).